The following is a 540-amino-acid chain: DEAD-box ATP-dependent RNA helicase 57 (540 aa).

The tract at residues 24 to 73 (DFARFRQGPPAPDVASAAAPSPEKKRKRQSKAKAKKSKKRRAEGADSASD) is disordered. The segment covering 47-64 (KKRKRQSKAKAKKSKKRR) has biased composition (basic residues). Residues 101-129 (KSEDSEVVRRRKEVEREIERAAILRKKFD) adopt a coiled-coil conformation. Residues 146-174 (ELVSRYGCDSYLVGNLSKLGFQEPTPIQR) carry the Q motif motif. The Helicase ATP-binding domain occupies 177–347 (IPILLSGREC…RTIMHDAVRV (171 aa)). 190–197 (APTGSGKT) is a binding site for ATP. Residues 294-297 (DESD) carry the DEAD box motif. In terms of domain architecture, Helicase C-terminal spans 375–519 (ALRQSFAESL…EVPSWIKALP (145 aa)).

It belongs to the DEAD box helicase family. DDX52/ROK1 subfamily.

The catalysed reaction is ATP + H2O = ADP + phosphate + H(+). The chain is DEAD-box ATP-dependent RNA helicase 57 from Oryza sativa subsp. japonica (Rice).